The sequence spans 369 residues: D-alanine--D-alanine ligase (369 aa).

The region spanning 152–359 (KKLFAAEGLP…YPSLLATMVE (208 aa)) is the ATP-grasp domain. An ATP-binding site is contributed by 180-235 (RERLGLPVFVKPARGGSSIGVSRVSSWDELDAAVAAARDHDPKVIVEAAIAGRELE). Asp-314, Glu-326, and Asn-328 together coordinate Mg(2+).

Belongs to the D-alanine--D-alanine ligase family. Mg(2+) serves as cofactor. It depends on Mn(2+) as a cofactor.

The protein localises to the cytoplasm. The catalysed reaction is 2 D-alanine + ATP = D-alanyl-D-alanine + ADP + phosphate + H(+). Its pathway is cell wall biogenesis; peptidoglycan biosynthesis. In terms of biological role, cell wall formation. The sequence is that of D-alanine--D-alanine ligase from Mycolicibacterium paratuberculosis (strain ATCC BAA-968 / K-10) (Mycobacterium paratuberculosis).